The sequence spans 415 residues: Cell division control protein 11 (415 aa).

Ser-2 carries the post-translational modification N-acetylserine. Ser-2 is subject to Phosphoserine. The short motif at 12 to 19 (RKRKHLKR) is the Basic motif element. In terms of domain architecture, Septin-type G spans 19-298 (RGITFTVMIV…ERYRTEALSG (280 aa)). Positions 29 to 36 (GQSGSGRS) are G1 motif. GTP-binding positions include 29–36 (GQSGSGRS), Gly-92, 172–180 (KSDSLTRDE), Gly-230, and Arg-247. The G3 motif stretch occupies residues 89–92 (DTPG). A G4 motif region spans residues 171 to 174 (SKSD). Phosphoserine is present on Ser-305. The segment at 307 to 360 (RPNLTKLNGSSSSSTTTRRNTNPFKQSNNINNDVLNPASDMHGQSTGENNETYM) is disordered. The segment covering 316 to 328 (SSSSSTTTRRNTN) has biased composition (low complexity). Residue Thr-327 is modified to Phosphothreonine. Polar residues-rich tracts occupy residues 329–340 (PFKQSNNINNDV) and 348–359 (HGQSTGENNETY). Positions 354-414 (ENNETYMTRE…LEKEAKIKQE (61 aa)) form a coiled coil. Lys-412 is covalently cross-linked (Glycyl lysine isopeptide (Lys-Gly) (interchain with G-Cter in SUMO)).

Belongs to the TRAFAC class TrmE-Era-EngA-EngB-Septin-like GTPase superfamily. Septin GTPase family. As to quaternary structure, component of the septin complex which consists of CDC3, CDC10, CDC11, CDC12 and probably SHS1 and rearranges to a cortical collar of highly ordered filaments at the mother-bud-neck. A complex formed by CDC3, CDC10, CDC11 and CDC12 is capable of forming long filaments in vitro and the components seem to be present in a 2:2:2:2 arrangement in vivo. The filaments are proposed to be formed by the end-to-end polymerization of CDC3-CDC12-CDC11 complexes with CDC10 serving as a bridge to bundle the polymers into paired filaments. Component of the GIN4 complex composed of at least BNI5, CDC3, CDC10, CDC11, CDC12, GIN4, NAP1 and SHS1. Self-associates. Interacts with BEM4, KCC4, SPR28 and SYP1. Interacts with BNI5. Post-translationally, sumoylated during mitosis on the mother cell side of the bud neck. Sumoylation probably plays a central role in regulating septin ring disassembly during the cell cycle.

Its subcellular location is the membrane. The protein resides in the bud neck. Its function is as follows. Septins are GTPases involved in cytokinesis that assemble early in the cell cycle as a patch at the incipient bud site and form a ring approximate 15 minutes before bud emergence, which transforms into an hour-glass shaped collar of cortical filaments that spans both sides of the mother-bud neck. This collar persists until just before cytokinesis, when it splits into two rings that occupy opposite sides of the neck. The septins at the bud neck serve as a structural scaffold that recruits different components involved in diverse processes at specific stages during the cell cycle. Many proteins bind asymmetrically to the septin collar. The septin assembly is regulated by protein kinases GIN4 and/or CLA4. May act by recruiting MYO1 and HOF1, a protein involved in septation, to the site of cleavage. Septins are also involved in cell morphogenesis, bud site selection, chitin deposition, cell cycle regulation, cell compartmentalization and spore wall formation. CDCd11 with SHS1 11 are involved in the recruitment of BNI5 and thereby ensure efficient localization at the bud neck of MYO1, the type II myosin of the actomyosin contractile ring. In Saccharomyces cerevisiae (strain ATCC 204508 / S288c) (Baker's yeast), this protein is Cell division control protein 11.